A 318-amino-acid polypeptide reads, in one-letter code: Ferredoxin--NADP reductase (318 aa).

Aspartate 33, glutamine 41, tyrosine 46, valine 84, phenylalanine 115, aspartate 276, and threonine 316 together coordinate FAD.

It belongs to the ferredoxin--NADP reductase type 2 family. Homodimer. It depends on FAD as a cofactor.

It catalyses the reaction 2 reduced [2Fe-2S]-[ferredoxin] + NADP(+) + H(+) = 2 oxidized [2Fe-2S]-[ferredoxin] + NADPH. The chain is Ferredoxin--NADP reductase from Lactobacillus johnsonii (strain CNCM I-12250 / La1 / NCC 533).